The primary structure comprises 202 residues: MELVLRDDEHSVLNVSDITFGRDFNEALVHQVIISYSSSIRQGTHAQKNRSEVSGSGKKPWRQKGTGRARVGSLRSPLWRSGGVTFAAKPKSFYQKINKKMYRGALKSIFSELIRQKRLVVFREFTIEFPKTRLLIDKLRDIKLHDVLIITKTKDNNLKLASRNLYKVDVQTVNHMNPRSLISFNHVLITSKAIQKVEELLT.

Positions His45–Val71 are disordered.

It belongs to the universal ribosomal protein uL4 family. Part of the 50S ribosomal subunit.

Its function is as follows. One of the primary rRNA binding proteins, this protein initially binds near the 5'-end of the 23S rRNA. It is important during the early stages of 50S assembly. It makes multiple contacts with different domains of the 23S rRNA in the assembled 50S subunit and ribosome. Forms part of the polypeptide exit tunnel. The sequence is that of Large ribosomal subunit protein uL4 from Buchnera aphidicola subsp. Baizongia pistaciae (strain Bp).